A 144-amino-acid chain; its full sequence is Ribosome-binding factor A (144 aa).

Residues 121–144 form a disordered region; it reads KAQTGVEEPLENTAEGEENPSGGE. Over residues 128-138 the composition is skewed to acidic residues; sequence EPLENTAEGEE.

It belongs to the RbfA family. As to quaternary structure, monomer. Binds 30S ribosomal subunits, but not 50S ribosomal subunits or 70S ribosomes.

The protein resides in the cytoplasm. Its function is as follows. One of several proteins that assist in the late maturation steps of the functional core of the 30S ribosomal subunit. Associates with free 30S ribosomal subunits (but not with 30S subunits that are part of 70S ribosomes or polysomes). Required for efficient processing of 16S rRNA. May interact with the 5'-terminal helix region of 16S rRNA. This is Ribosome-binding factor A from Synechococcus sp. (strain JA-2-3B'a(2-13)) (Cyanobacteria bacterium Yellowstone B-Prime).